A 578-amino-acid polypeptide reads, in one-letter code: Glycosyltransferase family 92 protein RCOM_0530710 (578 aa).

A helical membrane pass occupies residues 21–43 (SFFSVRSLTACLSFFVFLLFISS). The region spanning 295–531 (YELCACTMLW…QNQGSKDRAP (237 aa)) is the GT92 domain.

This sequence belongs to the glycosyltransferase 92 family.

It localises to the membrane. The protein is Glycosyltransferase family 92 protein RCOM_0530710 of Ricinus communis (Castor bean).